Here is a 120-residue protein sequence, read N- to C-terminus: Putative ankyrin repeat protein RBE_1215 (120 aa).

ANK repeat units lie at residues 22–52 (DGGNALHVACGAGGSLKMVKFLVENNILTNI) and 59–88 (FGDTPLTLAISYDHHDIVDYFKQKFNITSV).

This Rickettsia bellii (strain RML369-C) protein is Putative ankyrin repeat protein RBE_1215.